Here is a 267-residue protein sequence, read N- to C-terminus: NAD kinase (267 aa).

Asp-45 serves as the catalytic Proton acceptor. Residues 45–46 (DG), 121–122 (NE), Lys-147, Asp-149, 160–165 (TAYSKS), and Ala-184 contribute to the NAD(+) site.

The protein belongs to the NAD kinase family. Requires a divalent metal cation as cofactor.

It localises to the cytoplasm. It carries out the reaction NAD(+) + ATP = ADP + NADP(+) + H(+). Involved in the regulation of the intracellular balance of NAD and NADP, and is a key enzyme in the biosynthesis of NADP. Catalyzes specifically the phosphorylation on 2'-hydroxyl of the adenosine moiety of NAD to yield NADP. The chain is NAD kinase from Lactobacillus gasseri (strain ATCC 33323 / DSM 20243 / BCRC 14619 / CIP 102991 / JCM 1131 / KCTC 3163 / NCIMB 11718 / NCTC 13722 / AM63).